The sequence spans 346 residues: Holliday junction branch migration complex subunit RuvB (346 aa).

The large ATPase domain (RuvB-L) stretch occupies residues 1 to 182; the sequence is MKIELLNTPA…FGISSRFDYY (182 aa). ATP is bound by residues I21, R22, G63, K66, T67, T68, 129-131, R172, Y182, and R219; that span reads EDF. T67 lines the Mg(2+) pocket. The segment at 183–253 is small ATPAse domain (RuvB-S); sequence PPELLERIIL…IAMTTLASLE (71 aa). A head domain (RuvB-H) region spans residues 256–346; that stretch reads EEGLDDMDKK…GPLFDAAPAR (91 aa). Residues R311 and R316 each contribute to the DNA site.

The protein belongs to the RuvB family. Homohexamer. Forms an RuvA(8)-RuvB(12)-Holliday junction (HJ) complex. HJ DNA is sandwiched between 2 RuvA tetramers; dsDNA enters through RuvA and exits via RuvB. An RuvB hexamer assembles on each DNA strand where it exits the tetramer. Each RuvB hexamer is contacted by two RuvA subunits (via domain III) on 2 adjacent RuvB subunits; this complex drives branch migration. In the full resolvosome a probable DNA-RuvA(4)-RuvB(12)-RuvC(2) complex forms which resolves the HJ.

Its subcellular location is the cytoplasm. It carries out the reaction ATP + H2O = ADP + phosphate + H(+). Functionally, the RuvA-RuvB-RuvC complex processes Holliday junction (HJ) DNA during genetic recombination and DNA repair, while the RuvA-RuvB complex plays an important role in the rescue of blocked DNA replication forks via replication fork reversal (RFR). RuvA specifically binds to HJ cruciform DNA, conferring on it an open structure. The RuvB hexamer acts as an ATP-dependent pump, pulling dsDNA into and through the RuvAB complex. RuvB forms 2 homohexamers on either side of HJ DNA bound by 1 or 2 RuvA tetramers; 4 subunits per hexamer contact DNA at a time. Coordinated motions by a converter formed by DNA-disengaged RuvB subunits stimulates ATP hydrolysis and nucleotide exchange. Immobilization of the converter enables RuvB to convert the ATP-contained energy into a lever motion, pulling 2 nucleotides of DNA out of the RuvA tetramer per ATP hydrolyzed, thus driving DNA branch migration. The RuvB motors rotate together with the DNA substrate, which together with the progressing nucleotide cycle form the mechanistic basis for DNA recombination by continuous HJ branch migration. Branch migration allows RuvC to scan DNA until it finds its consensus sequence, where it cleaves and resolves cruciform DNA. The chain is Holliday junction branch migration complex subunit RuvB from Chlorobium phaeobacteroides (strain DSM 266 / SMG 266 / 2430).